The primary structure comprises 127 residues: MTITMLKSKIHRATVTEANLNYVGSITIDKYLMDKANILEYEKVQIVDIDNGNRFETYVIAGEKHSDVICLNGAAARMVQKGDKIIIMSYCSLTIDEANKFNPTVLFVDNKNNIEKLTNYEKHGEII.

The active-site Schiff-base intermediate with substrate; via pyruvic acid is S25. S25 carries the pyruvic acid (Ser) modification. T57 lines the substrate pocket. The active-site Proton donor is the Y58. 73–75 is a binding site for substrate; that stretch reads GAA.

This sequence belongs to the PanD family. In terms of assembly, heterooctamer of four alpha and four beta subunits. Pyruvate is required as a cofactor. In terms of processing, is synthesized initially as an inactive proenzyme, which is activated by self-cleavage at a specific serine bond to produce a beta-subunit with a hydroxyl group at its C-terminus and an alpha-subunit with a pyruvoyl group at its N-terminus.

Its subcellular location is the cytoplasm. It carries out the reaction L-aspartate + H(+) = beta-alanine + CO2. It participates in cofactor biosynthesis; (R)-pantothenate biosynthesis; beta-alanine from L-aspartate: step 1/1. In terms of biological role, catalyzes the pyruvoyl-dependent decarboxylation of aspartate to produce beta-alanine. The sequence is that of Aspartate 1-decarboxylase from Clostridium botulinum (strain ATCC 19397 / Type A).